We begin with the raw amino-acid sequence, 999 residues long: Protein Smaug (999 aa).

Positions 1–36 are enriched in polar residues; sequence MKYATGTDNAMTSGISGQTNNSNSASNEMQPTTSTP. 2 disordered regions span residues 1–69 and 329–349; these read MKYA…QSQP and LCPA…IAPP. 2 stretches are compositionally biased toward low complexity: residues 44–69 and 329–338; these read TSTA…QSQP and LCPASGSRSS. Residues serine 564 and serine 575 each carry the phosphoserine modification. The interval 583–763 is interaction with cup; that stretch reads EFKPNYIKFH…KDLKFKLSKM (181 aa). In terms of domain architecture, SAM spans 600–654; the sequence is GIGLWLKSLRLHKYIELFKNMTYEEMLLITEDFLQSVGVTKGASHKLALCIDKLK. Disordered regions lie at residues 773–892 and 955–977; these read HVKP…MQQM and QQSQ…EQQP. Polar residues-rich tracts occupy residues 801-822 and 854-864; these read KNGS…NFSL and HQPQYKSSSYP. Serine 972 bears the Phosphoserine mark.

This sequence belongs to the SMAUG family. Interacts with oskar (osk). Binds to the 3'-UTR of nanos (nos). Interacts with cup, which in turn recruits eIF4-E, leading to an indirect interaction between smg and eIF4-E that prevents mRNA translation. Forms a complex with aub, twin, AGO3, nanos mRNA and piRNAs that targets the nanos 3'-untranslated region, in early embryos. At syncytial blastoderm, it is located throughout the bulk cytoplasm and pole plasm. By the time of cellularization, it concentrates at the posterior pole.

The protein resides in the cytoplasm. Its function is as follows. Translation regulator that binds to the 3'-UTR of specific mRNAs such as nanos (nos) and prevents their translation. Prevents translation of unlocalized nanos in the bulk cytoplasm via the recruitment of cup. The polypeptide is Protein Smaug (smg) (Drosophila melanogaster (Fruit fly)).